A 260-amino-acid polypeptide reads, in one-letter code: Indole-3-glycerol phosphate synthase (260 aa).

This sequence belongs to the TrpC family.

It catalyses the reaction 1-(2-carboxyphenylamino)-1-deoxy-D-ribulose 5-phosphate + H(+) = (1S,2R)-1-C-(indol-3-yl)glycerol 3-phosphate + CO2 + H2O. It participates in amino-acid biosynthesis; L-tryptophan biosynthesis; L-tryptophan from chorismate: step 4/5. The chain is Indole-3-glycerol phosphate synthase from Staphylococcus haemolyticus (strain JCSC1435).